A 120-amino-acid polypeptide reads, in one-letter code: MFILEGYDSFVVFFIVACLVPILALSGSKLIRPKLSGIEKKMTYESGIEPMGEAWVQFNIRYYMFALIFVIFDVETLFLYPWAIVFKDLGITAFLETLIFLSILIIGLVYAWRKGALEWS.

3 consecutive transmembrane segments (helical) span residues 11–31 (VVFF…SKLI), 65–85 (FALI…WAIV), and 89–109 (LGIT…IGLV).

This sequence belongs to the complex I subunit 3 family. NDH is composed of at least 16 different subunits, 5 of which are encoded in the nucleus.

The protein localises to the plastid. It localises to the chloroplast thylakoid membrane. It catalyses the reaction a plastoquinone + NADH + (n+1) H(+)(in) = a plastoquinol + NAD(+) + n H(+)(out). The enzyme catalyses a plastoquinone + NADPH + (n+1) H(+)(in) = a plastoquinol + NADP(+) + n H(+)(out). In terms of biological role, NDH shuttles electrons from NAD(P)H:plastoquinone, via FMN and iron-sulfur (Fe-S) centers, to quinones in the photosynthetic chain and possibly in a chloroplast respiratory chain. The immediate electron acceptor for the enzyme in this species is believed to be plastoquinone. Couples the redox reaction to proton translocation, and thus conserves the redox energy in a proton gradient. In Mesostigma viride (Green alga), this protein is NAD(P)H-quinone oxidoreductase subunit 3, chloroplastic.